Reading from the N-terminus, the 467-residue chain is 3-isopropylmalate dehydratase large subunit (467 aa).

Residues Cys348, Cys409, and Cys412 each coordinate [4Fe-4S] cluster.

Belongs to the aconitase/IPM isomerase family. LeuC type 1 subfamily. In terms of assembly, heterodimer of LeuC and LeuD. The cofactor is [4Fe-4S] cluster.

It carries out the reaction (2R,3S)-3-isopropylmalate = (2S)-2-isopropylmalate. The protein operates within amino-acid biosynthesis; L-leucine biosynthesis; L-leucine from 3-methyl-2-oxobutanoate: step 2/4. Catalyzes the isomerization between 2-isopropylmalate and 3-isopropylmalate, via the formation of 2-isopropylmaleate. The polypeptide is 3-isopropylmalate dehydratase large subunit (Magnetococcus marinus (strain ATCC BAA-1437 / JCM 17883 / MC-1)).